Reading from the N-terminus, the 395-residue chain is DNA primase small subunit PriS (395 aa).

Active-site residues include aspartate 95, aspartate 97, and aspartate 302.

This sequence belongs to the eukaryotic-type primase small subunit family. As to quaternary structure, heterodimer of a small subunit (PriS) and a large subunit (PriL). Mg(2+) is required as a cofactor. The cofactor is Mn(2+).

In terms of biological role, catalytic subunit of DNA primase, an RNA polymerase that catalyzes the synthesis of short RNA molecules used as primers for DNA polymerase during DNA replication. The small subunit contains the primase catalytic core and has DNA synthesis activity on its own. Binding to the large subunit stabilizes and modulates the activity, increasing the rate of DNA synthesis while decreasing the length of the DNA fragments, and conferring RNA synthesis capability. The DNA polymerase activity may enable DNA primase to also catalyze primer extension after primer synthesis. May also play a role in DNA repair. This is DNA primase small subunit PriS from Methanothrix thermoacetophila (strain DSM 6194 / JCM 14653 / NBRC 101360 / PT) (Methanosaeta thermophila).